We begin with the raw amino-acid sequence, 149 residues long: MRNYDLSPLLRQWIGFDKLASSMQGSQEPIDFPPYNIEKKDDNHYRITLALAGFRQSDLDIEVEGPRLTVKGSPAPTEKAVEYLHQGLVFKPFTLSFTLAEHLHVSDAHFENGLLHIDLVRDVPEALQPQRIAIGGGRPALNQQPAEDA.

The region spanning 26–137 (SQEPIDFPPY…QPQRIAIGGG (112 aa)) is the sHSP domain.

This sequence belongs to the small heat shock protein (HSP20) family. Homodimer. Forms homomultimers of about 100-150 subunits at optimal growth temperatures. Conformation changes to oligomers at high temperatures or high ionic concentrations. The decrease in size of the multimers is accompanied by an increase in chaperone activity.

It is found in the cytoplasm. Its function is as follows. Associates with aggregated proteins, together with IbpA, to stabilize and protect them from irreversible denaturation and extensive proteolysis during heat shock and oxidative stress. Aggregated proteins bound to the IbpAB complex are more efficiently refolded and reactivated by the ATP-dependent chaperone systems ClpB and DnaK/DnaJ/GrpE. Its activity is ATP-independent. The protein is Small heat shock protein IbpB of Pectobacterium carotovorum subsp. carotovorum (strain PC1).